A 276-amino-acid polypeptide reads, in one-letter code: Radial spoke head protein 9 homolog (276 aa).

This sequence belongs to the flagellar radial spoke RSP9 family. As to quaternary structure, component of the axonemal radial spoke 1 (RS1) and 2 (RS2) complexes, at least composed of spoke head proteins RSPH1, RSPH3, RSPH9 and the cilia-specific component RSPH4A or sperm-specific component RSPH6A, spoke stalk proteins RSPH14, DNAJB13, DYDC1, ROPN1L and NME5, and the RS1 complex-specific anchor protein IQUB. Interacts with IQUB. Interacts with RSPH3B. Interacts with RSPH4A. Interacts with RSPH6A. Interacts with CFAP61. Interacts with LRRC23.

It is found in the cytoplasm. The protein localises to the cytoskeleton. The protein resides in the cilium axoneme. It localises to the flagellum axoneme. Its subcellular location is the cell projection. It is found in the kinocilium. Functions as part of axonemal radial spoke complexes that play an important part in the motility of sperm and cilia. Essential for both the radial spoke head assembly and the central pair microtubule stability in ependymal motile cilia. Required for motility of olfactory and neural cilia and for the structural integrity of ciliary axonemes in both 9+0 and 9+2 motile cilia. The sequence is that of Radial spoke head protein 9 homolog (RSPH9) from Homo sapiens (Human).